We begin with the raw amino-acid sequence, 276 residues long: Acyl-[acyl-carrier-protein]--UDP-N-acetylglucosamine O-acyltransferase (276 aa).

The protein belongs to the transferase hexapeptide repeat family. LpxA subfamily. As to quaternary structure, homotrimer.

Its subcellular location is the cytoplasm. It carries out the reaction a (3R)-hydroxyacyl-[ACP] + UDP-N-acetyl-alpha-D-glucosamine = a UDP-3-O-[(3R)-3-hydroxyacyl]-N-acetyl-alpha-D-glucosamine + holo-[ACP]. It functions in the pathway glycolipid biosynthesis; lipid IV(A) biosynthesis; lipid IV(A) from (3R)-3-hydroxytetradecanoyl-[acyl-carrier-protein] and UDP-N-acetyl-alpha-D-glucosamine: step 1/6. Functionally, involved in the biosynthesis of lipid A, a phosphorylated glycolipid that anchors the lipopolysaccharide to the outer membrane of the cell. This Synechocystis sp. (strain ATCC 27184 / PCC 6803 / Kazusa) protein is Acyl-[acyl-carrier-protein]--UDP-N-acetylglucosamine O-acyltransferase.